Reading from the N-terminus, the 339-residue chain is MIKIAAAGGGTGGHLYPLLAILETLAKRVDVKVLFFAVKGKIDERVVRKDHPEFETVSIDVRGLLRPLHHPKNLWRTLKIGIATIEVKKHLKRFKPDLVVLTGGYISGVVGLAAKDLGIPIFVHEQNVVPGLAVKVLSQYAKKVFVSFERTRNYLREWQDKIVVTGCPVRETEKEAPLKDFVLVLGGSLGSEAINELMEKVYPELQETQFVHSTGSDDWTKRLSAFPNVTALTYIDPMGAYWKKAIASISRAGASTIAEMMYYGVPGILIPWESSAESHQLENALEAERLGYGIVIRENEASPRKIIESIDKVVKKGKIEKMKENPASKISEEILGEIM.

UDP-N-acetyl-alpha-D-glucosamine is bound by residues 11-13, N127, R170, S188, I235, and Q280; that span reads TGG.

This sequence belongs to the glycosyltransferase 28 family. MurG subfamily.

Its subcellular location is the cell inner membrane. It carries out the reaction di-trans,octa-cis-undecaprenyl diphospho-N-acetyl-alpha-D-muramoyl-L-alanyl-D-glutamyl-meso-2,6-diaminopimeloyl-D-alanyl-D-alanine + UDP-N-acetyl-alpha-D-glucosamine = di-trans,octa-cis-undecaprenyl diphospho-[N-acetyl-alpha-D-glucosaminyl-(1-&gt;4)]-N-acetyl-alpha-D-muramoyl-L-alanyl-D-glutamyl-meso-2,6-diaminopimeloyl-D-alanyl-D-alanine + UDP + H(+). Its pathway is cell wall biogenesis; peptidoglycan biosynthesis. Cell wall formation. Catalyzes the transfer of a GlcNAc subunit on undecaprenyl-pyrophosphoryl-MurNAc-pentapeptide (lipid intermediate I) to form undecaprenyl-pyrophosphoryl-MurNAc-(pentapeptide)GlcNAc (lipid intermediate II). This is UDP-N-acetylglucosamine--N-acetylmuramyl-(pentapeptide) pyrophosphoryl-undecaprenol N-acetylglucosamine transferase from Thermotoga sp. (strain RQ2).